Here is a 541-residue protein sequence, read N- to C-terminus: L-ornithine N(5)-monooxygenase (541 aa).

FAD-binding positions include 50–58 (EKQPEFQWH) and Gln-69. Lys-74 serves as a coordination point for substrate. 223 to 226 (SGQS) contacts NADP(+). Substrate contacts are provided by residues 269–272 (NEIF) and Asn-300. 300-302 (NYS) is a binding site for NADP(+). The segment at 430–474 (TEIPKGPDGSLFDASEEEATWRPASPITPASPSPPSTPTSSALSQ) is disordered. 520 to 522 (SLL) provides a ligand contact to FAD. Ser-523 lines the substrate pocket.

This sequence belongs to the lysine N(6)-hydroxylase/L-ornithine N(5)-oxygenase family. As to quaternary structure, homotetramer. Requires FAD as cofactor.

It carries out the reaction L-ornithine + NADPH + O2 = N(5)-hydroxy-L-ornithine + NADP(+) + H2O. The catalysed reaction is L-ornithine + NADH + O2 = N(5)-hydroxy-L-ornithine + NAD(+) + H2O. It functions in the pathway siderophore biosynthesis. Its function is as follows. L-ornithine N(5)-monooxygenase; part of the siderophore basidioferrin biosynthetic pathway. The biosynthesis of basidioferrin depends on the hydroxylation of ornithine to N(5)-hydroxyornithine, catalyzed by the monooxygenase SMO1. The second step, the acylation of N(5)-hydroxy-L-ornithine is catalyzed by a not yet identified N-acyltransferase. Finally, assembly of basidioferrin is catalyzed by the nonribosomal peptide synthase (NRPS) NPS2 via amide bond formation between three L-AHO molecules to release the linear L-AHO trimer. The sequence is that of L-ornithine N(5)-monooxygenase (SMO1) from Ceriporiopsis subvermispora (strain B) (White-rot fungus).